A 142-amino-acid polypeptide reads, in one-letter code: Large ribosomal subunit protein uL11 (142 aa).

The protein belongs to the universal ribosomal protein uL11 family. As to quaternary structure, part of the ribosomal stalk of the 50S ribosomal subunit. Interacts with L10 and the large rRNA to form the base of the stalk. L10 forms an elongated spine to which L12 dimers bind in a sequential fashion forming a multimeric L10(L12)X complex. In terms of processing, one or more lysine residues are methylated.

Forms part of the ribosomal stalk which helps the ribosome interact with GTP-bound translation factors. The polypeptide is Large ribosomal subunit protein uL11 (Cronobacter sakazakii (strain ATCC BAA-894) (Enterobacter sakazakii)).